Consider the following 474-residue polypeptide: CUGBP Elav-like family member 4 (474 aa).

Positions 1–287 (MYIKMATLAN…AAFAAAQMQQ (287 aa)) are sufficient for RNA-binding and MSE-dependent splicing activity. A compositionally biased stretch (polar residues) spans 18–28 (LSTNGLGSSPG). Residues 18–41 (LSTNGLGSSPGSAGHMNGLSHSPG) are disordered. RRM domains are found at residues 54-135 (IKLF…PADS) and 141-221 (RKLF…FADT). The tract at residues 228-247 (RRMQQMAGQMGMFNPMAIPF) is necessary for TNNT2 exon 5 inclusion. Residues 392 to 467 (PQPPPMIPQQ…KRLKVQLKRP (76 aa)) enclose the RRM 3 domain.

The protein belongs to the CELF/BRUNOL family.

It localises to the nucleus. The protein localises to the cytoplasm. RNA-binding protein implicated in the regulation of pre-mRNA alternative splicing. Mediates exon inclusion and/or exclusion in pre-mRNA that are subject to tissue-specific and developmentally regulated alternative splicing. Specifically activates exon 5 inclusion of cardiac isoforms of TNNT2 during heart remodeling at the juvenile to adult transition. Promotes exclusion of both the smooth muscle (SM) and non-muscle (NM) exons in actinin pre-mRNAs. Activates the splicing of MAPT/Tau exon 10. Binds to muscle-specific splicing enhancer (MSE) intronic sites flanking the alternative exon 5 of TNNT2 pre-mRNA. This is CUGBP Elav-like family member 4 (CELF4) from Macaca fascicularis (Crab-eating macaque).